The following is a 455-amino-acid chain: UDP-N-acetylmuramoylalanine--D-glutamate ligase (455 aa).

117-123 (GSAGKTT) lines the ATP pocket.

It belongs to the MurCDEF family.

It is found in the cytoplasm. It carries out the reaction UDP-N-acetyl-alpha-D-muramoyl-L-alanine + D-glutamate + ATP = UDP-N-acetyl-alpha-D-muramoyl-L-alanyl-D-glutamate + ADP + phosphate + H(+). It functions in the pathway cell wall biogenesis; peptidoglycan biosynthesis. Functionally, cell wall formation. Catalyzes the addition of glutamate to the nucleotide precursor UDP-N-acetylmuramoyl-L-alanine (UMA). The chain is UDP-N-acetylmuramoylalanine--D-glutamate ligase from Symbiobacterium thermophilum (strain DSM 24528 / JCM 14929 / IAM 14863 / T).